The chain runs to 197 residues: Putative methyltransferase Mtx subunit A (197 aa).

Belongs to the MtrA family. As to quaternary structure, may be part of a complex composed of 3 subunits; MtxA, MtxH and MtxX.

In Methanosarcina barkeri (strain Fusaro / DSM 804), this protein is Putative methyltransferase Mtx subunit A (mtxA).